Consider the following 299-residue polypeptide: ATP phosphoribosyltransferase (299 aa).

This sequence belongs to the ATP phosphoribosyltransferase family. Long subfamily. The cofactor is Mg(2+).

Its subcellular location is the cytoplasm. The enzyme catalyses 1-(5-phospho-beta-D-ribosyl)-ATP + diphosphate = 5-phospho-alpha-D-ribose 1-diphosphate + ATP. Its pathway is amino-acid biosynthesis; L-histidine biosynthesis; L-histidine from 5-phospho-alpha-D-ribose 1-diphosphate: step 1/9. Feedback inhibited by histidine. Its function is as follows. Catalyzes the condensation of ATP and 5-phosphoribose 1-diphosphate to form N'-(5'-phosphoribosyl)-ATP (PR-ATP). Has a crucial role in the pathway because the rate of histidine biosynthesis seems to be controlled primarily by regulation of HisG enzymatic activity. This Shewanella pealeana (strain ATCC 700345 / ANG-SQ1) protein is ATP phosphoribosyltransferase.